Here is an 86-residue protein sequence, read N- to C-terminus: Omega-theraphotoxin-Hhn1e (86 aa).

Positions 1–21 are cleaved as a signal peptide; it reads MKSIVFVALFGLALLAVVCSA. A propeptide spanning residues 22 to 50 is cleaved from the precursor; it reads SEGAHKELLKEVVRAMVVDKTDAVQAEER. Cystine bridges form between Cys52–Cys66 and Cys65–Cys78.

This sequence belongs to the neurotoxin 10 (Hwtx-1) family. 17 (Hntx-9) subfamily. As to expression, expressed by the venom gland.

Its subcellular location is the secreted. Functionally, ion channel inhibitor. The polypeptide is Omega-theraphotoxin-Hhn1e (Cyriopagopus hainanus (Chinese bird spider)).